The sequence spans 388 residues: 4-hydroxy-3-methylbut-2-en-1-yl diphosphate synthase (flavodoxin) (388 aa).

The interval 1 to 22 (MTSVNLGMPAAPQPVLSPRRKT) is disordered. 4 residues coordinate [4Fe-4S] cluster: Cys281, Cys284, Cys316, and Glu323.

Belongs to the IspG family. Requires [4Fe-4S] cluster as cofactor.

It catalyses the reaction (2E)-4-hydroxy-3-methylbut-2-enyl diphosphate + oxidized [flavodoxin] + H2O + 2 H(+) = 2-C-methyl-D-erythritol 2,4-cyclic diphosphate + reduced [flavodoxin]. It functions in the pathway isoprenoid biosynthesis; isopentenyl diphosphate biosynthesis via DXP pathway; isopentenyl diphosphate from 1-deoxy-D-xylulose 5-phosphate: step 5/6. In terms of biological role, converts 2C-methyl-D-erythritol 2,4-cyclodiphosphate (ME-2,4cPP) into 1-hydroxy-2-methyl-2-(E)-butenyl 4-diphosphate. This is 4-hydroxy-3-methylbut-2-en-1-yl diphosphate synthase (flavodoxin) from Kocuria rhizophila (strain ATCC 9341 / DSM 348 / NBRC 103217 / DC2201).